The sequence spans 308 residues: Probable very-long-chain enoyl-CoA reductase art-1 (308 aa).

The Ubiquitin-like domain occupies 7-85; it reads VYDAKRTDNL…VLYVRDLGPQ (79 aa). The next 4 helical transmembrane spans lie at 112–132, 169–189, 194–214, and 255–275; these read FIYG…IAFF, WGFA…PPAF, VYFG…IHIL, and WIFF…TAGF.

Belongs to the steroid 5-alpha reductase family.

It localises to the endoplasmic reticulum membrane. The enzyme catalyses a very-long-chain 2,3-saturated fatty acyl-CoA + NADP(+) = a very-long-chain (2E)-enoyl-CoA + NADPH + H(+). It functions in the pathway lipid metabolism; fatty acid biosynthesis. Catalyzes the last of the four reactions of the long-chain fatty acids elongation cycle. This endoplasmic reticulum-bound enzymatic process, allows the addition of 2 carbons to the chain of long- and very long-chain fatty acids/VLCFAs per cycle. This enzyme reduces the trans-2,3-enoyl-CoA fatty acid intermediate to an acyl-CoA that can be further elongated by entering a new cycle of elongation. Thereby, it participates in the production of VLCFAs of different chain lengths that are involved in multiple biological processes as precursors of membrane lipids and lipid mediators. The polypeptide is Probable very-long-chain enoyl-CoA reductase art-1 (art-1) (Caenorhabditis elegans).